The chain runs to 656 residues: Anion exchange transporter (656 aa).

Topologically, residues 1–75 (MTGAKRKKRS…LSFAMLSSVH (75 aa)) are cytoplasmic. The helical transmembrane segment at 76–96 (PVFGLYGSLFPAIIYAIFGMG) threads the bilayer. Residues 97-144 (RHVATGTFALTSLISANAVERLVPQSSRNLTTQSNSSVLGLSEFELQR) are Extracellular-facing. The helical transmembrane segment at 145-165 (IGVAAAVSFLGGVIQLVMFVL) threads the bilayer. Residue Gln166 is a topological domain, cytoplasmic. Residues 167–187 (LGSATFLLTEPVISAMTTGAA) form a helical membrane-spanning segment. The Extracellular portion of the chain corresponds to 188–199 (THVVTSQVKYLL). Residues 200-220 (GIKMPYISGPLGFFYIYAYVF) traverse the membrane as a helical segment. Over 221–222 (EN) the chain is Cytoplasmic. A helical membrane pass occupies residues 223–243 (IKSVQLEALLFSLLSIIVLVL). At 244–254 (VKELNEQFKRK) the chain is on the extracellular side. Residues 255–275 (IKVVLPVDLVLIIAASFACYC) traverse the membrane as a helical segment. The Cytoplasmic portion of the chain corresponds to 276–306 (TNMENTYGLEVVGHIPNGIPPPRAPPMNILS). A helical membrane pass occupies residues 307 to 327 (AVLTEAFGVALVGYVASLALA). Residues 328-343 (QGSAKKFKYSVDDNQE) lie on the Extracellular side of the membrane. Residues 344-364 (FLAHGLSNVIPSFLFCIPSAA) form a helical membrane-spanning segment. The Cytoplasmic segment spans residues 365 to 383 (AMGRTAGLYSTGAKTQVAC). Helical transmembrane passes span 384 to 404 (LISCIFVLIVIYAIGPLLYWL) and 405 to 425 (PMCVLASIIVVGLKGMLIQFR). Over 426–448 (DLKKYWNVDKIDWGIWISTYIFT) the chain is Extracellular. Residues 449–469 (ICFAANVGLLFGVICTIAIVL) traverse the membrane as a helical segment. The Cytoplasmic segment spans residues 470–656 (GRFPRAKTLS…LSKASDHSEV (187 aa)). An STAS domain is found at 492-641 (TEMHDETSQQ…DSVPAAISII (150 aa)). The interval 641–656 (IQSNKNLSKASDHSEV) is membrane targeting.

It belongs to the SLC26A/SulP transporter (TC 2.A.53) family. In terms of tissue distribution, expressed in the Reissner's membrane epithelial cells in the cochlea (at protein level). Expressed in the retinal pigment epithelium (at protein level). Abundantly expressed in parietal cells on the glandular portion of the stomach. Lower levels are observed in the kidney, with expression in the proximal tubule and thick ascending limb of the loop of Henle. Also expressed in distal segments of nephron, in extraglomerular mesagial cells and a subpopulation of intercalated cells of outer medullary collecting ducts. Expressed in the thyroid gland.

The protein resides in the basolateral cell membrane. Its subcellular location is the recycling endosome membrane. The protein localises to the apical cell membrane. It localises to the lateral cell membrane. The enzyme catalyses chloride(in) = chloride(out). The catalysed reaction is iodide(out) = iodide(in). It carries out the reaction bromide(in) = bromide(out). It catalyses the reaction oxalate(in) = oxalate(out). The enzyme catalyses nitrate(in) = nitrate(out). The catalysed reaction is sulfate(in) = sulfate(out). It carries out the reaction hydrogencarbonate(in) = hydrogencarbonate(out). It catalyses the reaction D-gluconate(in) = D-gluconate(out). The enzyme catalyses thiocyanate(in) = thiocyanate(out). The catalysed reaction is hydrogencarbonate(in) + chloride(out) = hydrogencarbonate(out) + chloride(in). Its activity is regulated as follows. Regulated by pH. Activity inhibited by all inhibitors of several anion channels and transporters, including 4,4'-Di-isothiocyanatostilbene-2,2'-disulfonic acid (DIDS), diphenylamine-2-carboxylic acid, glybenclamide and 5-Nitro-2-(3-phenylpropyl-amino)benzoic acid. Acts as an anion channel mediating the transport of chloride, bromide, iodide, nitrate, sulfate, gluconate, thiocyanate and bicarbonate ions. Its permeability towards bicarbonate is weak and increases when pH is above 7. Mediates oxalate transport. Mediates thiocyanate transport in retinal pigment epithelium cells. Mediates iodide transport in the thyroid gland, playing an important role in the synthesis of thyroid hormones and the maintenance of thyroid function. Although it is an anion channel, according to PubMed:12736153 and PubMed:19723628 it has been shown to exhibit chloride-bicarbonate exchanger activity. The chain is Anion exchange transporter from Mus musculus (Mouse).